The sequence spans 512 residues: Endoglucanase 14 (512 aa).

The first 22 residues, 1–22 (MLAAAIELVVIATSCMVRDAHG), serve as a signal peptide directing secretion. Asn76 is a glycosylation site (N-linked (GlcNAc...) asparagine). Asp103 functions as the Nucleophile in the catalytic mechanism. N-linked (GlcNAc...) asparagine glycosylation is found at Asn192 and Asn215. Active-site residues include His433, Asp484, and Glu493.

Belongs to the glycosyl hydrolase 9 (cellulase E) family.

It is found in the secreted. It carries out the reaction Endohydrolysis of (1-&gt;4)-beta-D-glucosidic linkages in cellulose, lichenin and cereal beta-D-glucans.. This chain is Endoglucanase 14, found in Oryza sativa subsp. japonica (Rice).